The chain runs to 128 residues: Secreted RxLR effector protein 57 (128 aa).

Residues 1 to 31 form the signal peptide; the sequence is MHRKRLRVVLSATLLDLITCVQLMLDPLVRS. The RxLR signature appears at 58 to 61; it reads RILR.

It belongs to the RxLR effector family.

The protein localises to the secreted. It is found in the host nucleus. It localises to the host cytoplasm. Its function is as follows. Secreted effector that completely suppresses the host cell death induced by cell death-inducing proteins. This is Secreted RxLR effector protein 57 from Plasmopara viticola (Downy mildew of grapevine).